The primary structure comprises 130 residues: Large ribosomal subunit protein bL20 (130 aa).

This sequence belongs to the bacterial ribosomal protein bL20 family.

Binds directly to 23S ribosomal RNA and is necessary for the in vitro assembly process of the 50S ribosomal subunit. It is not involved in the protein synthesizing functions of that subunit. The polypeptide is Large ribosomal subunit protein bL20 (Salinispora arenicola (strain CNS-205)).